The chain runs to 146 residues: Anti-sigma F factor (146 aa).

This sequence belongs to the anti-sigma-factor family.

It carries out the reaction L-seryl-[protein] + ATP = O-phospho-L-seryl-[protein] + ADP + H(+). It catalyses the reaction L-threonyl-[protein] + ATP = O-phospho-L-threonyl-[protein] + ADP + H(+). Its function is as follows. Binds to sigma F and blocks its ability to form an RNA polymerase holoenzyme (E-sigma F). Phosphorylates SpoIIAA on a serine residue. This phosphorylation may enable SpoIIAA to act as an anti-anti-sigma factor that counteracts SpoIIAB and thus releases sigma F from inhibition. The chain is Anti-sigma F factor from Geobacillus kaustophilus (strain HTA426).